The following is a 936-amino-acid chain: Bifunctional uridylyltransferase/uridylyl-removing enzyme (936 aa).

Residues 1 to 372 (MTIPRIRQPR…SIATLLMRKR (372 aa)) are uridylyltransferase. The uridylyl-removing stretch occupies residues 373–727 (NLGDFVLDGG…VLPDPERAVS (355 aa)). The HD domain occupies 488–610 (TDEHTIRAIG…VQSVERLHLL (123 aa)). 2 consecutive ACT domains span residues 728–809 (EVLV…KALR) and 840–915 (VIEI…TVPR). The segment covering 915 to 930 (RKVEEGAEQGAEKADA) has biased composition (basic and acidic residues). A disordered region spans residues 915–936 (RKVEEGAEQGAEKADAGEIVAA).

This sequence belongs to the GlnD family. Mg(2+) serves as cofactor.

It catalyses the reaction [protein-PII]-L-tyrosine + UTP = [protein-PII]-uridylyl-L-tyrosine + diphosphate. It carries out the reaction [protein-PII]-uridylyl-L-tyrosine + H2O = [protein-PII]-L-tyrosine + UMP + H(+). With respect to regulation, uridylyltransferase (UTase) activity is inhibited by glutamine, while glutamine activates uridylyl-removing (UR) activity. In terms of biological role, modifies, by uridylylation and deuridylylation, the PII regulatory proteins (GlnB and homologs), in response to the nitrogen status of the cell that GlnD senses through the glutamine level. Under low glutamine levels, catalyzes the conversion of the PII proteins and UTP to PII-UMP and PPi, while under higher glutamine levels, GlnD hydrolyzes PII-UMP to PII and UMP (deuridylylation). Thus, controls uridylylation state and activity of the PII proteins, and plays an important role in the regulation of nitrogen fixation and metabolism. This Rhodospirillum rubrum (strain ATCC 11170 / ATH 1.1.1 / DSM 467 / LMG 4362 / NCIMB 8255 / S1) protein is Bifunctional uridylyltransferase/uridylyl-removing enzyme.